Here is a 1356-residue protein sequence, read N- to C-terminus: Transmembrane protein 94 (1356 aa).

Residues 1 to 64 (MDLKEKHLGE…FLHHSNRCSC (64 aa)) lie on the Cytoplasmic side of the membrane. Residues 65–85 (FHWPGASLMLLAVLLLLGCCG) form a helical membrane-spanning segment. Residues 86–92 (GQPAGSR) are Lumenal-facing. The chain crosses the membrane as a helical span at residues 93–113 (GVGLVNASALFLLLLLNLVLI). Residues 114-273 (GRQDRLKRRE…RPVTALDNER (160 aa)) lie on the Cytoplasmic side of the membrane. A phosphoserine mark is found at S221 and S225. Residues 274 to 294 (FTVQSVMLHYAVPVVLAGFLI) form a helical membrane-spanning segment. Residues 295 to 320 (TNALRFIFSAPGVTSWQYTLLQLQVN) lie on the Lumenal side of the membrane. Residues 321–341 (GVLPILPLLFPVLWVLATACG) form a helical membrane-spanning segment. At 342–1092 (EARVLAQMSK…RHATYGIRKC (751 aa)) the chain is on the cytoplasmic side. The DKQGIL motif lies at 417–422 (DKQGIL). 2 disordered regions span residues 439–461 (VEPPHSSHEDLTDGLSTRSFCHP) and 483–541 (EQER…ESDP). Basic and acidic residues predominate over residues 440–449 (EPPHSSHEDL). Phosphoserine occurs at positions 444, 445, and 454. Positions 502-511 (HHKAHGRSKH) are enriched in basic residues. Phosphoserine is present on residues S513, S518, S798, and S941. The chain crosses the membrane as a helical span at residues 1093–1113 (FLFLLQCQLTLVVIQFLSCLV). Residues 1114–1120 (QLPPLLS) are Lumenal-facing. The helical transmembrane segment at 1121–1141 (TTDILWLSCFCYPLLSISLLG) threads the bilayer. At 1142 to 1167 (KPPHSSIMSMATGKNLQSIPKKTQHY) the chain is on the cytoplasmic side. Residues 1168–1188 (FLLCFLLKFSLTISSCLICFG) traverse the membrane as a helical segment. The Lumenal segment spans residues 1189-1228 (FTLQSFCDSSRDRNLTNCSSVMLPSNDDRAPAWFEDFANG). N-linked (GlcNAc...) asparagine glycosylation is found at N1202 and N1205. A helical transmembrane segment spans residues 1229–1249 (LLSAQKLTAALIVLHTVFISI). Residues 1250–1261 (THVHRTKPLWRK) lie on the Cytoplasmic side of the membrane. The chain crosses the membrane as a helical span at residues 1262–1282 (SPLTNLWWAVTVPVVLLGQVV). The Lumenal portion of the chain corresponds to 1283–1306 (QTAVDLQLWTHRDSHVHFGLEDVP). A helical transmembrane segment spans residues 1307–1327 (LLTWLLGCLSLVLVVVTNEIV). The Cytoplasmic segment spans residues 1328–1356 (KLHEIRVRVRYQKRQKLQFETKLGMNSPF). The short motif at 1351–1353 (GMN) is the GMN; metal-binding motif element.

As to quaternary structure, forms homooligomers. As to expression, expressed ubiquitously.

It is found in the endoplasmic reticulum membrane. Its function is as follows. Could function in the uptake of Mg(2+) from the cytosol into the endoplasmic reticulum and regulate intracellular Mg(2+) homeostasis. In Homo sapiens (Human), this protein is Transmembrane protein 94.